The following is a 455-amino-acid chain: Epoxide hydrolase 1 (455 aa).

The helical; Signal-anchor for type III membrane protein transmembrane segment at 1 to 21 threads the bilayer; it reads MWLELVLASLLGFVIYWFVSR. Residues 22 to 455 are Cytoplasmic-facing; the sequence is DKEETLPLGD…RKFVSLAELQ (434 aa). The active-site Nucleophile is the Asp-226. Arg-295 carries the dimethylated arginine modification. Residue Tyr-374 is the Proton donor of the active site. His-431 functions as the Proton acceptor in the catalytic mechanism. Residue Lys-439 is modified to N6-acetyllysine.

This sequence belongs to the peptidase S33 family.

The protein resides in the microsome membrane. It is found in the endoplasmic reticulum membrane. It carries out the reaction cis-stilbene oxide + H2O = (1R,2R)-hydrobenzoin. The catalysed reaction is 1-(4-methoxyphenyl)-N-methyl-N-[(3-methyloxetan-3-yl)methyl]methanamine + H2O = 2-{[(4-methoxybenzyl)(methyl)amino]methyl}-2-methylpropane-1,3-diol. It catalyses the reaction 8,9-epoxy-(5Z,11Z,14Z)-eicosatrienoate + H2O = 8,9-dihydroxy-(5Z,11Z,14Z)-eicosatrienoate. The enzyme catalyses 11,12-epoxy-(5Z,8Z,14Z)-eicosatrienoate + H2O = 11,12-dihydroxy-(5Z,8Z,14Z)-eicosatrienoate. It carries out the reaction 2-(5Z,8Z,11Z,14Z-eicosatetraenoyl)-glycerol + H2O = glycerol + (5Z,8Z,11Z,14Z)-eicosatetraenoate + H(+). Its activity is regulated as follows. Inhibited by 10-hydroxystearamide and methoxy-arachidonyl fluorophosphate. In terms of biological role, biotransformation enzyme that catalyzes the hydrolysis of arene and aliphatic epoxides to less reactive and more water soluble dihydrodiols by the trans addition of water. May play a role in the metabolism of endogenous lipids such as epoxide-containing fatty acids. Metabolizes the abundant endocannabinoid 2-arachidonoylglycerol (2-AG) to free arachidonic acid (AA) and glycerol. Binds 20(S)-hydroxycholesterol (20(S)-OHC). The chain is Epoxide hydrolase 1 from Rattus norvegicus (Rat).